An 89-amino-acid polypeptide reads, in one-letter code: Small ribosomal subunit protein uS15 (89 aa).

It belongs to the universal ribosomal protein uS15 family. Part of the 30S ribosomal subunit. Forms a bridge to the 50S subunit in the 70S ribosome, contacting the 23S rRNA.

In terms of biological role, one of the primary rRNA binding proteins, it binds directly to 16S rRNA where it helps nucleate assembly of the platform of the 30S subunit by binding and bridging several RNA helices of the 16S rRNA. Its function is as follows. Forms an intersubunit bridge (bridge B4) with the 23S rRNA of the 50S subunit in the ribosome. This chain is Small ribosomal subunit protein uS15, found in Beijerinckia indica subsp. indica (strain ATCC 9039 / DSM 1715 / NCIMB 8712).